We begin with the raw amino-acid sequence, 589 residues long: UvrABC system protein C (589 aa).

Residues 13–90 (PNPGCYLFKN…IKTHTPKYNF (78 aa)) enclose the GIY-YIG domain. The UVR domain occupies 194 to 229 (KDILKKLHHLMQKASEKMFYEKAQEYRDIIDSIKQT).

This sequence belongs to the UvrC family. As to quaternary structure, interacts with UvrB in an incision complex.

It localises to the cytoplasm. Functionally, the UvrABC repair system catalyzes the recognition and processing of DNA lesions. UvrC both incises the 5' and 3' sides of the lesion. The N-terminal half is responsible for the 3' incision and the C-terminal half is responsible for the 5' incision. This Aster yellows witches'-broom phytoplasma (strain AYWB) protein is UvrABC system protein C.